Here is a 364-residue protein sequence, read N- to C-terminus: Dual-specificity RNA methyltransferase RlmN (364 aa).

The Proton acceptor role is filled by Glu91. Positions 97–333 (EDDRGTLCVS…VTVRKTRGDD (237 aa)) constitute a Radical SAM core domain. Cys104 and Cys338 form a disulfide bridge. [4Fe-4S] cluster-binding residues include Cys111, Cys115, and Cys118. Residues 164–165 (GE), Ser196, 218–220 (SLH), and Asn295 contribute to the S-adenosyl-L-methionine site. The active-site S-methylcysteine intermediate is the Cys338.

This sequence belongs to the radical SAM superfamily. RlmN family. [4Fe-4S] cluster is required as a cofactor.

The protein resides in the cytoplasm. The catalysed reaction is adenosine(2503) in 23S rRNA + 2 reduced [2Fe-2S]-[ferredoxin] + 2 S-adenosyl-L-methionine = 2-methyladenosine(2503) in 23S rRNA + 5'-deoxyadenosine + L-methionine + 2 oxidized [2Fe-2S]-[ferredoxin] + S-adenosyl-L-homocysteine. It carries out the reaction adenosine(37) in tRNA + 2 reduced [2Fe-2S]-[ferredoxin] + 2 S-adenosyl-L-methionine = 2-methyladenosine(37) in tRNA + 5'-deoxyadenosine + L-methionine + 2 oxidized [2Fe-2S]-[ferredoxin] + S-adenosyl-L-homocysteine. Specifically methylates position 2 of adenine 2503 in 23S rRNA and position 2 of adenine 37 in tRNAs. m2A2503 modification seems to play a crucial role in the proofreading step occurring at the peptidyl transferase center and thus would serve to optimize ribosomal fidelity. This Chromobacterium violaceum (strain ATCC 12472 / DSM 30191 / JCM 1249 / CCUG 213 / NBRC 12614 / NCIMB 9131 / NCTC 9757 / MK) protein is Dual-specificity RNA methyltransferase RlmN.